We begin with the raw amino-acid sequence, 308 residues long: HPr kinase/phosphorylase (308 aa).

Residues histidine 136 and lysine 157 contribute to the active site. 151–158 (GESGIGKS) serves as a coordination point for ATP. Serine 158 provides a ligand contact to Mg(2+). The active-site Proton acceptor; for phosphorylation activity. Proton donor; for dephosphorylation activity is aspartate 175. The interval 198–207 (IEVRGMGIID) is important for the catalytic mechanism of both phosphorylation and dephosphorylation. Glutamate 199 serves as a coordination point for Mg(2+). Arginine 240 is an active-site residue. Residues 261–266 (PIRPGR) are important for the catalytic mechanism of dephosphorylation.

It belongs to the HPrK/P family. In terms of assembly, homohexamer. Requires Mg(2+) as cofactor.

The enzyme catalyses [HPr protein]-L-serine + ATP = [HPr protein]-O-phospho-L-serine + ADP + H(+). It carries out the reaction [HPr protein]-O-phospho-L-serine + phosphate + H(+) = [HPr protein]-L-serine + diphosphate. Functionally, catalyzes the ATP- as well as the pyrophosphate-dependent phosphorylation of a specific serine residue in HPr, a phosphocarrier protein of the phosphoenolpyruvate-dependent sugar phosphotransferase system (PTS). HprK/P also catalyzes the pyrophosphate-producing, inorganic phosphate-dependent dephosphorylation (phosphorolysis) of seryl-phosphorylated HPr (P-Ser-HPr). The two antagonistic activities of HprK/P are regulated by several intracellular metabolites, which change their concentration in response to the absence or presence of rapidly metabolisable carbon sources (glucose, fructose, etc.) in the growth medium. Therefore, by controlling the phosphorylation state of HPr, HPrK/P is a sensor enzyme that plays a major role in the regulation of carbon metabolism and sugar transport: it mediates carbon catabolite repression (CCR), and regulates PTS-catalyzed carbohydrate uptake and inducer exclusion. The polypeptide is HPr kinase/phosphorylase (Clostridium kluyveri (strain NBRC 12016)).